Reading from the N-terminus, the 1220-residue chain is Cullin-associated NEDD8-dissociated protein 1 (1220 aa).

HEAT repeat units follow at residues 1-35, 42-79, 121-157, 259-295, 365-410, 615-650, 680-700, 701-737, 738-775, 810-847, 850-887, and 1020-1057; these read MEEG…DANH, ESFP…KIPQ, FYTS…SLEI, ADYT…YQQV, LSRL…HVPR, IFLR…SVTD, TTAY…YLAE, SLLE…SILL, KSKN…VISK, FQSK…DYGK, LPAN…QSEK, and EVSQ…KSSV.

It belongs to the CAND family.

Its subcellular location is the nucleus. In terms of biological role, key assembly factor of SCF (SKP1-CUL1-F-box protein) E3 ubiquitin ligase complexes that promotes the exchange of the substrate-recognition F-box subunit in SCF complexes, thereby playing a key role in the cellular repertoire of SCF complexes. Acts as a F-box protein exchange factor. The sequence is that of Cullin-associated NEDD8-dissociated protein 1 (knd1) from Schizosaccharomyces pombe (strain 972 / ATCC 24843) (Fission yeast).